Reading from the N-terminus, the 94-residue chain is Protein SKIP34 (94 aa).

The segment at 1–27 (MCYGHNQSLSSRSSLRRRSHDGEDDSV) is disordered. Positions 23–61 (EDDSVVDDLRDRLAETEARLRRARAREAELSRRLEHMKR) form a coiled coil.

In terms of assembly, interacts with SPK1B/ASK2.

The sequence is that of Protein SKIP34 (SKIP34) from Arabidopsis thaliana (Mouse-ear cress).